Here is a 203-residue protein sequence, read N- to C-terminus: Somatotropin (203 aa).

A signal peptide spans 1 to 17; that stretch reads MDRVVIVLSVLSVAASS. Q18 bears the Pyrrolidone carboxylic acid mark. H35 lines the Zn(2+) pocket. The cysteines at positions 68 and 176 are disulfide-linked. Zn(2+) is bound at residue E185. The cysteines at positions 193 and 201 are disulfide-linked.

This sequence belongs to the somatotropin/prolactin family.

The protein resides in the secreted. Functionally, growth hormone plays an important role in growth control and is involved in the regulation of several anabolic processes. Implicated as an osmoregulatory substance important for seawater adaptation. The sequence is that of Somatotropin (gh) from Solea senegalensis (Senegalese sole).